A 20-amino-acid polypeptide reads, in one-letter code: TVLKTDAQCNCEAFKALSLP.

It belongs to the plant LTP family.

In Jatropha curcas (Barbados nut), this protein is Non-specific lipid-transfer protein-like protein.